Reading from the N-terminus, the 529-residue chain is MEQSFLPIRCALISVSDKTGIFSLAKNLIKHKVKLITTSGTYKYLLEKGIFSTSVSEYINHPEIINGRVKTLHPKIHGGILSNNKNINENKNLNIKKIDMVITNFYPFKKKVKKENIKIENIIDNIDIGGVALARSAAKNYKYVTVVVNINQYSKLSSEMDKNSGSVSFKTRFYFSTLAFQYSYSYDKEIFNYFNKIYFKEIELKKNLKNKKFPELFSISFSKKEDVLYGENYHQKAAFYTDPVIHPGTVPFSIQRQGKKLSYNNIVDSDIAINCVMNFSEIACVIVKHSTPCGVSSGKNIIDAYRSAYYSDPDSAFGGIISFNRPLTIEAAEFIINKQFVEIIIAPVIEKDALLTLKSKSKIIVLECGYLSKNFLLNFKKVNCGLLLQDSDNKILKEKDIKIVSKRQPSKLEIESSIFIWKIIKFIKSNAIIYGKNKRTLGIGSGQTSRIFSTRIAAYKAIDQGFSLKGSVMASDAFFPFRDSIDFASKFGVSCIIQPGGSINDDKIISAVDENNMSMIFTNTRQFSH.

Residues 1 to 148 (MEQSFLPIRC…KNYKYVTVVV (148 aa)) form the MGS-like domain.

This sequence belongs to the PurH family.

The catalysed reaction is (6R)-10-formyltetrahydrofolate + 5-amino-1-(5-phospho-beta-D-ribosyl)imidazole-4-carboxamide = 5-formamido-1-(5-phospho-D-ribosyl)imidazole-4-carboxamide + (6S)-5,6,7,8-tetrahydrofolate. It carries out the reaction IMP + H2O = 5-formamido-1-(5-phospho-D-ribosyl)imidazole-4-carboxamide. It participates in purine metabolism; IMP biosynthesis via de novo pathway; 5-formamido-1-(5-phospho-D-ribosyl)imidazole-4-carboxamide from 5-amino-1-(5-phospho-D-ribosyl)imidazole-4-carboxamide (10-formyl THF route): step 1/1. The protein operates within purine metabolism; IMP biosynthesis via de novo pathway; IMP from 5-formamido-1-(5-phospho-D-ribosyl)imidazole-4-carboxamide: step 1/1. The chain is Bifunctional purine biosynthesis protein PurH from Wigglesworthia glossinidia brevipalpis.